Consider the following 145-residue polypeptide: Large ribosomal subunit protein uL11 (145 aa).

The protein belongs to the universal ribosomal protein uL11 family. Part of the ribosomal stalk of the 50S ribosomal subunit. Interacts with L10 and the large rRNA to form the base of the stalk. L10 forms an elongated spine to which L12 dimers bind in a sequential fashion forming a multimeric L10(L12)X complex. One or more lysine residues are methylated.

In terms of biological role, forms part of the ribosomal stalk which helps the ribosome interact with GTP-bound translation factors. The polypeptide is Large ribosomal subunit protein uL11 (Rickettsia typhi (strain ATCC VR-144 / Wilmington)).